Reading from the N-terminus, the 190-residue chain is Small ribosomal subunit protein uS4 (190 aa).

One can recognise an S4 RNA-binding domain in the interval 105-181 (RRLQTLVYKL…RKKAKAAEGG (77 aa)). The tract at residues 163–190 (GGGRPGRVRRKKAKAAEGGDGDAEEDEE) is disordered. Positions 181–190 (GDGDAEEDEE) are enriched in acidic residues.

This sequence belongs to the universal ribosomal protein uS4 family.

This is Small ribosomal subunit protein uS4 (RPS9) from Podospora anserina (Pleurage anserina).